The chain runs to 449 residues: Putative transporter C83.11 (449 aa).

The next 9 helical transmembrane spans lie at L7 to I27, V47 to F67, V84 to L104, I109 to Y129, V136 to C156, I164 to G184, L205 to Y225, I255 to I275, and I278 to S298. S348 and S352 each carry phosphoserine. Position 355 is a phosphotyrosine (Y355). Polar residues predominate over residues N382 to N415. The interval N382 to I416 is disordered.

It belongs to the TPT transporter family.

It is found in the membrane. The sequence is that of Putative transporter C83.11 from Schizosaccharomyces pombe (strain 972 / ATCC 24843) (Fission yeast).